Reading from the N-terminus, the 648-residue chain is Acetyl-coenzyme A synthetase (648 aa).

CoA contacts are provided by residues 191 to 194, T310, and N334; that span reads RGGR. ATP contacts are provided by residues 386-388, 410-415, D499, and R514; these read GEP and DTWWQT. S522 contributes to the CoA binding site. R525 serves as a coordination point for ATP. The Mg(2+) site is built by V536, H538, and I541. Residue R583 participates in CoA binding. At K608 the chain carries N6-acetyllysine.

Belongs to the ATP-dependent AMP-binding enzyme family. Mg(2+) is required as a cofactor. Post-translationally, acetylated. Deacetylation by the SIR2-homolog deacetylase activates the enzyme.

The enzyme catalyses acetate + ATP + CoA = acetyl-CoA + AMP + diphosphate. In terms of biological role, catalyzes the conversion of acetate into acetyl-CoA (AcCoA), an essential intermediate at the junction of anabolic and catabolic pathways. AcsA undergoes a two-step reaction. In the first half reaction, AcsA combines acetate with ATP to form acetyl-adenylate (AcAMP) intermediate. In the second half reaction, it can then transfer the acetyl group from AcAMP to the sulfhydryl group of CoA, forming the product AcCoA. This Aeromonas hydrophila subsp. hydrophila (strain ATCC 7966 / DSM 30187 / BCRC 13018 / CCUG 14551 / JCM 1027 / KCTC 2358 / NCIMB 9240 / NCTC 8049) protein is Acetyl-coenzyme A synthetase.